Consider the following 886-residue polypeptide: Conserved oligomeric Golgi complex subunit 1 (886 aa).

The segment covering 834–846 (SAERKSPIQEPVE) has biased composition (basic and acidic residues). The disordered stretch occupies residues 834-886 (SAERKSPIQEPVEKTATTTPTRKSGGNGARKGDSSKSKSSAASFFGMSQEWFR). Ser839 carries the phosphoserine modification. Residues 848–857 (TATTTPTRKS) are compositionally biased toward polar residues.

This sequence belongs to the COG1 family. In terms of assembly, component of the conserved oligomeric Golgi complex which is composed of eight different subunits and is required for normal Golgi morphology and localization.

The protein localises to the golgi apparatus membrane. In terms of biological role, required for normal Golgi function. The protein is Conserved oligomeric Golgi complex subunit 1 of Drosophila melanogaster (Fruit fly).